Consider the following 157-residue polypeptide: Heavy metal-associated isoprenylated plant protein 16 (157 aa).

Residues 2-71 (KQKILIRIAM…KVAFAELVSV (70 aa)) enclose the HMA domain. A disordered region spans residues 73 to 115 (KVEPPKDGDKKPEEEKKPEEKKPEEKKPEEKKPEPCCQPWQKP). A compositionally biased stretch (basic and acidic residues) spans 75–106 (EPPKDGDKKPEEEKKPEEKKPEEKKPEEKKPE). Cysteine 154 is subject to Cysteine methyl ester. Cysteine 154 carries the S-farnesyl cysteine lipid modification. The propeptide at 155 to 157 (RIM) is removed in mature form.

This sequence belongs to the HIPP family.

Probable heavy-metal-binding protein. The chain is Heavy metal-associated isoprenylated plant protein 16 from Arabidopsis thaliana (Mouse-ear cress).